The primary structure comprises 214 residues: tRNA (guanine-N(7)-)-methyltransferase (214 aa).

Positions 43, 68, 95, and 117 each coordinate S-adenosyl-L-methionine. D117 is a catalytic residue. Residues K121, D153, and 190 to 193 each bind substrate; that span reads TEYE.

It belongs to the class I-like SAM-binding methyltransferase superfamily. TrmB family.

It carries out the reaction guanosine(46) in tRNA + S-adenosyl-L-methionine = N(7)-methylguanosine(46) in tRNA + S-adenosyl-L-homocysteine. The protein operates within tRNA modification; N(7)-methylguanine-tRNA biosynthesis. Catalyzes the formation of N(7)-methylguanine at position 46 (m7G46) in tRNA. The polypeptide is tRNA (guanine-N(7)-)-methyltransferase (Staphylococcus aureus (strain Mu3 / ATCC 700698)).